Here is a 282-residue protein sequence, read N- to C-terminus: Malonyl-[acyl-carrier protein] O-methyltransferase 1 (282 aa).

It belongs to the methyltransferase superfamily.

It catalyses the reaction malonyl-[ACP] + S-adenosyl-L-methionine = malonyl-[ACP] methyl ester + S-adenosyl-L-homocysteine. The protein operates within cofactor biosynthesis; biotin biosynthesis. In terms of biological role, converts the free carboxyl group of a malonyl-thioester to its methyl ester by transfer of a methyl group from S-adenosyl-L-methionine (SAM). It allows to synthesize pimeloyl-ACP via the fatty acid synthetic pathway. The chain is Malonyl-[acyl-carrier protein] O-methyltransferase 1 from Coxiella burnetii (strain RSA 493 / Nine Mile phase I).